The chain runs to 356 residues: Ribosomal RNA large subunit methyltransferase M (356 aa).

S-adenosyl-L-methionine-binding positions include Ser187, Cys220–Gly223, Asp239, Asp259, and Asp276. Lys305 (proton acceptor) is an active-site residue.

This sequence belongs to the class I-like SAM-binding methyltransferase superfamily. RNA methyltransferase RlmE family. RlmM subfamily. As to quaternary structure, monomer.

Its subcellular location is the cytoplasm. The enzyme catalyses cytidine(2498) in 23S rRNA + S-adenosyl-L-methionine = 2'-O-methylcytidine(2498) in 23S rRNA + S-adenosyl-L-homocysteine + H(+). Catalyzes the 2'-O-methylation at nucleotide C2498 in 23S rRNA. This chain is Ribosomal RNA large subunit methyltransferase M, found in Pseudoalteromonas atlantica (strain T6c / ATCC BAA-1087).